A 334-amino-acid polypeptide reads, in one-letter code: 3-keto-steroid reductase/17-beta-hydroxysteroid dehydrogenase 7 (334 aa).

Residues 1-229 (MRKVVLITGA…VTCPGVVMTN (229 aa)) are Extracellular-facing. 8–15 (TGASSGIG) is a binding site for NAD(+). N-linked (GlcNAc...) asparagine glycosylation is present at Asn37. Substrate is bound at residue Ser171. Asn178 is a glycosylation site (N-linked (GlcNAc...) asparagine). Residue Tyr193 is the Proton acceptor of the active site. An N-linked (GlcNAc...) asparagine glycan is attached at Asn229. The helical transmembrane segment at 230 to 250 (LTYGILPPFVWTLLLPVIWLL) threads the bilayer. Residues 251 to 334 (RFFAHAFTVT…ITIQKSDHHS (84 aa)) are Cytoplasmic-facing.

The protein belongs to the short-chain dehydrogenases/reductases (SDR) family. ERG27 subfamily. Binds to the short form of prolactin receptor. Post-translationally, phosphorylated. In terms of tissue distribution, most abundant in ovaries of pregnant animals.

It is found in the endoplasmic reticulum membrane. The catalysed reaction is 17beta-estradiol + NADP(+) = estrone + NADPH + H(+). It carries out the reaction a 3beta-hydroxysteroid + NADP(+) = a 3-oxosteroid + NADPH + H(+). The enzyme catalyses 4alpha-methyl-5alpha-cholest-7-en-3beta-ol + NADP(+) = 4alpha-methyl-5alpha-cholest-7-en-3-one + NADPH + H(+). It catalyses the reaction 4alpha-methyl-5alpha-cholest-8-en-3-one + NADPH + H(+) = 4alpha-methyl-5alpha-cholest-8-en-3beta-ol + NADP(+). The catalysed reaction is 3-dehydro-4alpha-methylzymosterol + NADPH + H(+) = 4alpha-methylzymosterol + NADP(+). It carries out the reaction zymosterone + NADPH + H(+) = zymosterol + NADP(+). The enzyme catalyses 5alpha-cholest-8-en-3-one + NADPH + H(+) = 5alpha-cholest-8-en-3beta-ol + NADP(+). It catalyses the reaction 5alpha-androstane-3beta,17beta-diol + NADP(+) = 17beta-hydroxy-5alpha-androstan-3-one + NADPH + H(+). The catalysed reaction is 5alpha-androstane-3alpha,17beta-diol + NADP(+) = 17beta-hydroxy-5alpha-androstan-3-one + NADPH + H(+). The protein operates within steroid biosynthesis; estrogen biosynthesis. Its pathway is steroid biosynthesis; zymosterol biosynthesis; zymosterol from lanosterol: step 5/6. In terms of biological role, bifunctional enzyme involved in steroid-hormone metabolism and cholesterol biosynthesis. Catalyzes the NADP(H)-dependent reduction of estrogens and androgens and regulates the biological potency of these steroids. Converts estrone (E1) to a more potent estrogen, 17beta-estradiol (E2). Converts dihydrotestosterone (DHT) to an inactive form. Also participates in the post-squalene cholesterol biosynthesis, as a 3-ketosteroid reductase. The polypeptide is 3-keto-steroid reductase/17-beta-hydroxysteroid dehydrogenase 7 (Hsd17b7) (Rattus norvegicus (Rat)).